The primary structure comprises 489 residues: MPSTTSQNIGTVISIRGSVVDIRFDNISSDNQLPPIRTLLRTGKDNSIAIEVFSQLDDQRVRGIALTPTQGLARGMQVEDTGEPLQTPVGKGILSRMFDVFGNTIDKKDAPIDVEWRSVHNEPPPLARRSTKTEVFETGIKVIDVLMPLERGGKAGLFGGAGVGKTVLLTEMIHNMVGQHAGVSIFCGIGERCREGEELYREMKEAGVLDSMVMMFGQMNEPPGARFRVGHAALTMAEYFRDDEHRDVLLLMDNIFRFIQAGMEVSGLMGQMPARLGYQPTMGTELSQLEERIANTGSGAITSIQAVYVPADDFTDPAAVHTFSHLSASIVLSRKRASEGLYPAIDPLQSSSKMATPSIIGKRHYDLAQEIRRTLAQYSELKDIIAMLGMEQLSPEDRKVVGRARRLERFLTQPFFTTEQFTGMSGKLVSLDDALDGCERILQDEFEDYPESALYMIGAIDEAHEKSKKAAEDKPKAEEDEDATSLHDA.

Gly-159 to Thr-166 contributes to the ATP binding site. The segment covering Glu-465–Ala-477 has biased composition (basic and acidic residues). The interval Glu-465–Ala-489 is disordered.

The protein belongs to the ATPase alpha/beta chains family. As to quaternary structure, F-type ATPases have 2 components, CF(1) - the catalytic core - and CF(0) - the membrane proton channel. CF(1) has five subunits: alpha(3), beta(3), gamma(1), delta(1), epsilon(1). CF(0) has three main subunits: a(1), b(2) and c(9-12). The alpha and beta chains form an alternating ring which encloses part of the gamma chain. CF(1) is attached to CF(0) by a central stalk formed by the gamma and epsilon chains, while a peripheral stalk is formed by the delta and b chains.

The protein resides in the cell inner membrane. The catalysed reaction is ATP + H2O + 4 H(+)(in) = ADP + phosphate + 5 H(+)(out). Functionally, produces ATP from ADP in the presence of a proton gradient across the membrane. The catalytic sites are hosted primarily by the beta subunits. The chain is ATP synthase subunit beta 1 from Marinomonas sp. (strain MWYL1).